The chain runs to 129 residues: SPbeta prophage-derived protein NrdI (129 aa).

It belongs to the NrdI family.

Functionally, probably involved in ribonucleotide reductase function. The polypeptide is SPbeta prophage-derived protein NrdI (nrdIB) (Bacillus subtilis (strain 168)).